The following is a 243-amino-acid chain: Carboxy-S-adenosyl-L-methionine synthase (243 aa).

Residues tyrosine 40, 65–67 (GCS), 90–91 (DN), 118–119 (DI), asparagine 133, and arginine 200 each bind S-adenosyl-L-methionine.

It belongs to the class I-like SAM-binding methyltransferase superfamily. Cx-SAM synthase family. Homodimer.

It catalyses the reaction prephenate + S-adenosyl-L-methionine = carboxy-S-adenosyl-L-methionine + 3-phenylpyruvate + H2O. In terms of biological role, catalyzes the conversion of S-adenosyl-L-methionine (SAM) to carboxy-S-adenosyl-L-methionine (Cx-SAM). This chain is Carboxy-S-adenosyl-L-methionine synthase, found in Shewanella sediminis (strain HAW-EB3).